The chain runs to 589 residues: uncharacterized protein (589 aa).

Transmembrane regions (helical) follow at residues 90–110 (YIVI…QTVI), 128–148 (SWIG…CGIM), 162–182 (IVLF…LWLV), 189–209 (GIGG…ITPL), 217–237 (GCMG…GGAI), 245–265 (WIFF…IFFL), 284–304 (FVGI…LNIG), 311–331 (AHAN…GFVV), 355–375 (VMVT…YIPV), 390–410 (VHTL…GMGI), 419–439 (PMIG…AIYY), 448–468 (GFLA…LIAV), 483–503 (AFML…AVIY), and 545–565 (IRMI…LSFF).

It belongs to the major facilitator superfamily. TCR/Tet family.

Its subcellular location is the membrane. This is an uncharacterized protein from Schizosaccharomyces pombe (strain 972 / ATCC 24843) (Fission yeast).